The sequence spans 192 residues: Peptidyl-tRNA hydrolase (192 aa).

Residue Tyr-17 participates in tRNA binding. Residue His-22 is the Proton acceptor of the active site. 3 residues coordinate tRNA: Tyr-68, Asn-70, and Asn-116.

Belongs to the PTH family. Monomer.

The protein resides in the cytoplasm. It catalyses the reaction an N-acyl-L-alpha-aminoacyl-tRNA + H2O = an N-acyl-L-amino acid + a tRNA + H(+). Functionally, hydrolyzes ribosome-free peptidyl-tRNAs (with 1 or more amino acids incorporated), which drop off the ribosome during protein synthesis, or as a result of ribosome stalling. Its function is as follows. Catalyzes the release of premature peptidyl moieties from peptidyl-tRNA molecules trapped in stalled 50S ribosomal subunits, and thus maintains levels of free tRNAs and 50S ribosomes. In Mycolicibacterium gilvum (strain PYR-GCK) (Mycobacterium gilvum (strain PYR-GCK)), this protein is Peptidyl-tRNA hydrolase.